The chain runs to 190 residues: NADH dehydrogenase [ubiquinone] iron-sulfur protein 3 (190 aa).

Belongs to the complex I 30 kDa subunit family. Complex I is composed of at least 49 different subunits. This is a component of the iron-sulfur (IP) fragment of the enzyme.

It is found in the mitochondrion inner membrane. It catalyses the reaction a ubiquinone + NADH + 5 H(+)(in) = a ubiquinol + NAD(+) + 4 H(+)(out). Functionally, core subunit of the mitochondrial membrane respiratory chain NADH dehydrogenase (Complex I) that is believed to belong to the minimal assembly required for catalysis. Complex I functions in the transfer of electrons from NADH to the respiratory chain. The immediate electron acceptor for the enzyme is believed to be ubiquinone. This is NADH dehydrogenase [ubiquinone] iron-sulfur protein 3 (NAD9) from Arabidopsis thaliana (Mouse-ear cress).